A 211-amino-acid chain; its full sequence is Fucoxanthin-chlorophyll a-c binding protein F, chloroplastic (211 aa).

A chloroplast-targeting transit peptide spans 1-33 (AIACAAAPGLRGPSAFNGAALSTPAKSSSAMKM). Helical transmembrane passes span 75–95 (IAML…PGML), 116–136 (IPPG…LAVM), and 177–197 (GRAA…SNQP).

The protein belongs to the fucoxanthin chlorophyll protein family. The LHC complex of chromophytic algae is composed of fucoxanthin, chlorophyll A and C bound non-covalently by fucoxanthin chlorophyll proteins (FCPs). The ratio of pigments in this LHC is; fucoxanthin: chlorophyll C: chlorophyll A; (0.6-1): (0.1-0.3): (1).

It localises to the plastid. The protein localises to the chloroplast thylakoid membrane. The light-harvesting complex (LHC) functions as a light receptor, it captures and delivers excitation energy to photosystems with which it is closely associated. Energy is transferred from the carotenoid and chlorophyll C (or B) to chlorophyll A and the photosynthetic reaction centers where it is used to synthesize ATP and reducing power. The sequence is that of Fucoxanthin-chlorophyll a-c binding protein F, chloroplastic (FCPF) from Macrocystis pyrifera (Giant kelp).